A 140-amino-acid chain; its full sequence is Chromatin accessibility complex 16kD protein (140 aa).

The disordered stretch occupies residues 111–140 (LNRSAGSDDDDDDDDDDDEEESESESESDE). A compositionally biased stretch (acidic residues) spans 117 to 140 (SDDDDDDDDDDDEEESESESESDE).

As to quaternary structure, component of the chromatin accessibility complex (CHRAC), composed of Chrac-14, Chrac-16, Acf and Iswi. Forms a heterodimer with Chrac-14. The Chrac-14/Chrac-16 heterodimer interacts with Acf (via N-terminus). Stabilizes the interaction between Chrac-14 and Iswi.

It localises to the nucleus. Its function is as follows. Histone-like protein which promotes nucleosome sliding of ATP-dependent nucleosome remodeling complexes. Part of the chromatin-accessibility complex (CHRAC) which uses energy/ATP to increase the general accessibility of DNA in chromatin. As a heterodimer with Chrac-14, binds DNA and facilitates nucleosome sliding by Acf. As part of the CHRAC complex, required for oogenesis. The protein is Chromatin accessibility complex 16kD protein of Drosophila melanogaster (Fruit fly).